We begin with the raw amino-acid sequence, 375 residues long: Amylovoran biosynthesis protein AmsC (375 aa).

9 consecutive transmembrane segments (helical) span residues 2 to 22, 31 to 51, 93 to 113, 162 to 182, 208 to 228, 256 to 276, 287 to 307, 309 to 329, and 337 to 357; these read AIYW…LAMI, KILI…FAGI, MVLA…LLFI, IAFI…FIVL, LPLV…KKLF, VFGL…LYYF, VYIL…FSDF, IFGG…FAFL, and LLNF…NTIL.

It localises to the cell membrane. The protein operates within glycan metabolism; exopolysaccharide biosynthesis. Functionally, involved in the biosynthesis of amylovoran which functions as a virulence factor. The chain is Amylovoran biosynthesis protein AmsC (amsC) from Erwinia amylovora (Fire blight bacteria).